A 95-amino-acid polypeptide reads, in one-letter code: uncharacterized protein (95 aa).

The helical transmembrane segment at 45–65 (WLSGLAFVLQAALVMPVVLAF) threads the bilayer.

The protein localises to the membrane. This is an uncharacterized protein from Mycobacterium leprae (strain TN).